Reading from the N-terminus, the 307-residue chain is Protein TIPIN homolog (307 aa).

Disordered stretches follow at residues 1–50 (MASL…SQDA) and 252–279 (ASMD…LSNE). A compositionally biased stretch (pro residues) spans 262-271 (PLPPSQPPTP).

This sequence belongs to the CSM3 family.

The protein localises to the cytoplasm. Its subcellular location is the nucleus. Required for normal progression of S-phase. Important for cell survival after DNA damage or replication stress. This chain is Protein TIPIN homolog, found in Drosophila melanogaster (Fruit fly).